Reading from the N-terminus, the 483-residue chain is Malonate-semialdehyde dehydrogenase 2 (483 aa).

Residues Phe152, Lys176, Glu179, Arg180, and Ser229 each contribute to the NAD(+) site. Cys284 acts as the Nucleophile in catalysis. Position 384 (Glu384) interacts with NAD(+).

The protein belongs to the aldehyde dehydrogenase family. IolA subfamily. In terms of assembly, homotetramer.

It catalyses the reaction 3-oxopropanoate + NAD(+) + CoA + H2O = hydrogencarbonate + acetyl-CoA + NADH + H(+). The enzyme catalyses 2-methyl-3-oxopropanoate + NAD(+) + CoA + H2O = propanoyl-CoA + hydrogencarbonate + NADH + H(+). Its pathway is polyol metabolism; myo-inositol degradation into acetyl-CoA; acetyl-CoA from myo-inositol: step 7/7. Catalyzes the oxidation of malonate semialdehyde (MSA) and methylmalonate semialdehyde (MMSA) into acetyl-CoA and propanoyl-CoA, respectively. Is involved in a myo-inositol catabolic pathway. Bicarbonate, and not CO2, is the end-product of the enzymatic reaction. This is Malonate-semialdehyde dehydrogenase 2 from Bacillus mycoides (strain KBAB4) (Bacillus weihenstephanensis).